Reading from the N-terminus, the 108-residue chain is Thioredoxin Asp f 28 (108 aa).

One can recognise a Thioredoxin domain in the interval Met1 to Ala108. Residues Cys33 and Cys36 each act as nucleophile in the active site. A disulfide bridge links Cys33 with Cys36.

Belongs to the thioredoxin family.

Its function is as follows. Participates in various redox reactions through the reversible oxidation of its active center dithiol to a disulfide and catalyzes dithiol-disulfide exchange reactions. The protein is Thioredoxin Asp f 28 of Aspergillus fumigatus (Neosartorya fumigata).